The following is an 843-amino-acid chain: Taste receptor type 1 member 2 (843 aa).

Positions 1 to 19 (MGPQARTLHLLFLLLHALP) are cleaved as a signal peptide. Topologically, residues 20–570 (KPVMLVGNSD…AFLEWHEVPT (551 aa)) are extracellular. N87, N296, N316, N355, N372, N432, N484, N491, and N531 each carry an N-linked (GlcNAc...) asparagine glycan. Residues 571–591 (IVVTILAALGFISTLAILLIF) traverse the membrane as a helical segment. Residues 592 to 606 (WRHFQTPMVRSAGGP) lie on the Cytoplasmic side of the membrane. The helical transmembrane segment at 607 to 627 (MCFLMLVPLLLAFGMVPVYVG) threads the bilayer. Over 628–642 (PPTVFSCFCRQAFFT) the chain is Extracellular. The chain crosses the membrane as a helical span at residues 643 to 663 (VCFSVCLSCITVRSFQIVCVF). Residues 664 to 682 (KMARRLPSAYGFWMRYHGP) lie on the Cytoplasmic side of the membrane. Residues 683 to 703 (YVFVAFITAVKVALVAGNMLA) form a helical membrane-spanning segment. Residues 704-731 (TTINPIGRTDPDDPNIIILSCHPNYRNG) are Extracellular-facing. The chain crosses the membrane as a helical span at residues 732 to 752 (LLFNTSMDLLLSVLGFSFAYV). Over 753 to 764 (GKELPTNYNEAK) the chain is Cytoplasmic. A helical transmembrane segment spans residues 765-785 (FITLSMTFSFTSSISLCTFMS). Topologically, residues 786–789 (VHDG) are extracellular. Residues 790 to 810 (VLVTIMDLLVTVLNFLAIGLG) form a helical membrane-spanning segment. Over 811-843 (YFGPKCYMILFYPERNTSAYFNSMIQGYTMRKS) the chain is Cytoplasmic.

The protein belongs to the G-protein coupled receptor 3 family. TAS1R subfamily. In terms of assembly, forms heterodimers with TAS1R3. Expressed mainly in circumvallate and foliate taste papillae.

It is found in the cell membrane. In terms of biological role, putative taste receptor. TAS1R2/TAS1R3 recognizes diverse natural and synthetic sweeteners. The protein is Taste receptor type 1 member 2 (Tas1r2) of Mus musculus (Mouse).